Reading from the N-terminus, the 206-residue chain is Adenylyl-sulfate kinase (206 aa).

31–38 is an ATP binding site; the sequence is GLSASGKS. Ser105 functions as the Phosphoserine intermediate in the catalytic mechanism.

This sequence belongs to the APS kinase family.

It catalyses the reaction adenosine 5'-phosphosulfate + ATP = 3'-phosphoadenylyl sulfate + ADP + H(+). Its pathway is sulfur metabolism; hydrogen sulfide biosynthesis; sulfite from sulfate: step 2/3. Functionally, catalyzes the synthesis of activated sulfate. The polypeptide is Adenylyl-sulfate kinase (sD) (Emericella nidulans (strain FGSC A4 / ATCC 38163 / CBS 112.46 / NRRL 194 / M139) (Aspergillus nidulans)).